The sequence spans 488 residues: Probable multidrug resistance protein NorM (488 aa).

A run of 12 helical transmembrane segments spans residues 11–31 (AILR…AMVF), 55–75 (YAFV…LVAI), 97–117 (AALA…LLVF), 127–147 (AMQF…FMVL), 159–179 (PVMA…YSFI), 190–210 (LAGI…LLAL), 247–267 (GTYA…GIIG), 271–291 (LAAH…PVGL), 317–337 (VGIG…WWMP), 355–375 (VAAM…FDGT), 393–413 (FLVG…LLAF), and 421–441 (GVWW…TLAF).

This sequence belongs to the multi antimicrobial extrusion (MATE) (TC 2.A.66.1) family.

It is found in the cell inner membrane. Multidrug efflux pump. This is Probable multidrug resistance protein NorM (norM) from Pseudomonas aeruginosa (strain ATCC 15692 / DSM 22644 / CIP 104116 / JCM 14847 / LMG 12228 / 1C / PRS 101 / PAO1).